A 316-amino-acid polypeptide reads, in one-letter code: Ribosomal RNA small subunit methyltransferase H (316 aa).

S-adenosyl-L-methionine contacts are provided by residues 42 to 44 (GGH), aspartate 62, phenylalanine 86, aspartate 104, and glutamine 111.

It belongs to the methyltransferase superfamily. RsmH family.

It is found in the cytoplasm. The enzyme catalyses cytidine(1402) in 16S rRNA + S-adenosyl-L-methionine = N(4)-methylcytidine(1402) in 16S rRNA + S-adenosyl-L-homocysteine + H(+). Functionally, specifically methylates the N4 position of cytidine in position 1402 (C1402) of 16S rRNA. This chain is Ribosomal RNA small subunit methyltransferase H, found in Polynucleobacter asymbioticus (strain DSM 18221 / CIP 109841 / QLW-P1DMWA-1) (Polynucleobacter necessarius subsp. asymbioticus).